The sequence spans 248 residues: Probable phosphatase VS_II0429 (248 aa).

The Zn(2+) site is built by His-8, His-10, His-16, His-41, Glu-74, His-102, His-132, Asp-194, and His-196.

The protein belongs to the PHP family. Zn(2+) serves as cofactor.

The polypeptide is Probable phosphatase VS_II0429 (Vibrio atlanticus (strain LGP32) (Vibrio splendidus (strain Mel32))).